The chain runs to 390 residues: Fer-related kinase 1 (390 aa).

The region spanning 23 to 119 is the SH2 domain; sequence YYHGMVPRQD…ASGAKIRRPM (97 aa). Positions 131–386 constitute a Protein kinase domain; it reads IVANKKLGEG…SIHKKLREFY (256 aa). Residues 137-145 and Lys-161 contribute to the ATP site; that span reads LGEGAFGDV. Asp-252 (proton acceptor) is an active-site residue.

The protein belongs to the protein kinase superfamily. Tyr protein kinase family. Fes/fps subfamily. Interacts with hmp-2. Requires Mn(2+) as cofactor.

The protein resides in the nucleus. It is found in the cytoplasm. Its subcellular location is the cell junction. The protein localises to the cell membrane. The enzyme catalyses L-tyrosyl-[protein] + ATP = O-phospho-L-tyrosyl-[protein] + ADP + H(+). Its function is as follows. Non-receptor tyrosine-protein kinase which plays a role in morphogenesis by regulating the epidermal enclosure of the embryo, independently of its kinase activity. Prevents hyperactivation of the Wnt signaling pathway during endoderm development, probably by preventing hmp-2 nuclear translocation. This Caenorhabditis elegans protein is Fer-related kinase 1.